Consider the following 237-residue polypeptide: Orotidine 5'-phosphate decarboxylase (237 aa).

Residues Asp-11, Lys-34, 61-70 (DLKLHDIPNT), Thr-124, Arg-186, Gln-195, Gly-215, and Arg-216 each bind substrate. Lys-63 (proton donor) is an active-site residue.

The protein belongs to the OMP decarboxylase family. Type 1 subfamily. In terms of assembly, homodimer.

The catalysed reaction is orotidine 5'-phosphate + H(+) = UMP + CO2. It functions in the pathway pyrimidine metabolism; UMP biosynthesis via de novo pathway; UMP from orotate: step 2/2. In terms of biological role, catalyzes the decarboxylation of orotidine 5'-monophosphate (OMP) to uridine 5'-monophosphate (UMP). This chain is Orotidine 5'-phosphate decarboxylase, found in Lactococcus lactis subsp. cremoris (strain SK11).